The chain runs to 328 residues: Malate dehydrogenase (328 aa).

12–18 is an NAD(+) binding site; that stretch reads GAAGQIG. Substrate contacts are provided by arginine 95 and arginine 101. NAD(+)-binding positions include asparagine 108, glutamine 115, and 132-134; that span reads VGN. Positions 134 and 165 each coordinate substrate. The Proton acceptor role is filled by histidine 190.

This sequence belongs to the LDH/MDH superfamily. MDH type 2 family.

The catalysed reaction is (S)-malate + NAD(+) = oxaloacetate + NADH + H(+). Catalyzes the reversible oxidation of malate to oxaloacetate. The chain is Malate dehydrogenase from Leptothrix cholodnii (strain ATCC 51168 / LMG 8142 / SP-6) (Leptothrix discophora (strain SP-6)).